A 404-amino-acid polypeptide reads, in one-letter code: MSHKIMAINAGSSSLKFQLLAMPQGEMICQGLIERIGMSDAQVTLKAPAQKWQETLPVADHREAVTLLLEKLLSHNIISSLEEIDGVGHRVAHGGESFKDSARVTDETLAEIERLAELAPLHNPVNALGIAVFRQLLPKTPAVAVFDTAFHQTLDEPSFIYPLPWRYYSELGIRRYGFHGTSHKYVSAQLAEKLGVPLSALRVVCCHLGNGSSICAIKGGHSVNTSMGFTPQSGVMMGTRSGDIDPSILPWIALREGKTPQQLNQLLNNESGLLGVSGVSPDYRDVEHAADTGNHQAALALTLFAERIRATIGSYIMQMGGLDALVFTGGIGENSARARAAICHNLNFLGLAVDEEKNQRNATFIQTENAVVKVAVINTNEELMIAQDVMRLAISETVTLGIPA.

Belongs to the acetokinase family. PduW subfamily.

The protein resides in the cytoplasm. The enzyme catalyses propanoate + ATP = propanoyl phosphate + ADP. It functions in the pathway polyol metabolism; 1,2-propanediol degradation. Functionally, works with phosphate acetyltransferase (pta) to capture exogenous propionate and regenerate propionyl-CoA during degradation of 1,2-propanediol (1,2-PD). In terms of biological role, expression of a cosmid containing the full 21-gene pdu operon in E.coli allows E.coli to grow on 1,2-propanediol (1,2-PD) with the appearance of bacterial microcompartments (BMC) in its cytoplasm. The polypeptide is Propionate kinase (Citrobacter freundii).